The following is a 339-amino-acid chain: Glucokinase (339 aa).

16-21 (GDIGGT) is an ATP binding site.

It belongs to the bacterial glucokinase family.

Its subcellular location is the cytoplasm. It carries out the reaction D-glucose + ATP = D-glucose 6-phosphate + ADP + H(+). The chain is Glucokinase from Pseudomonas paraeruginosa (strain DSM 24068 / PA7) (Pseudomonas aeruginosa (strain PA7)).